Consider the following 123-residue polypeptide: Ribosome-binding factor A (123 aa).

It belongs to the RbfA family. In terms of assembly, monomer. Binds 30S ribosomal subunits, but not 50S ribosomal subunits or 70S ribosomes.

It localises to the cytoplasm. Functionally, one of several proteins that assist in the late maturation steps of the functional core of the 30S ribosomal subunit. Associates with free 30S ribosomal subunits (but not with 30S subunits that are part of 70S ribosomes or polysomes). Required for efficient processing of 16S rRNA. May interact with the 5'-terminal helix region of 16S rRNA. This Dechloromonas aromatica (strain RCB) protein is Ribosome-binding factor A.